The following is a 159-amino-acid chain: Endoribonuclease YbeY (159 aa).

The Zn(2+) site is built by His-125, His-129, and His-135.

This sequence belongs to the endoribonuclease YbeY family. The cofactor is Zn(2+).

It localises to the cytoplasm. Its function is as follows. Single strand-specific metallo-endoribonuclease involved in late-stage 70S ribosome quality control and in maturation of the 3' terminus of the 16S rRNA. This is Endoribonuclease YbeY from Ligilactobacillus salivarius (strain UCC118) (Lactobacillus salivarius).